The chain runs to 428 residues: 3-phosphoshikimate 1-carboxyvinyltransferase (428 aa).

3 residues coordinate 3-phosphoshikimate: Lys19, Ser20, and Arg24. Lys19 is a binding site for phosphoenolpyruvate. Gly91 and Arg119 together coordinate phosphoenolpyruvate. Positions 164, 166, 312, and 339 each coordinate 3-phosphoshikimate. Residue Gln166 coordinates phosphoenolpyruvate. Catalysis depends on Asp312, which acts as the Proton acceptor. Residues Arg343 and Arg386 each contribute to the phosphoenolpyruvate site.

This sequence belongs to the EPSP synthase family. In terms of assembly, monomer.

It is found in the cytoplasm. The catalysed reaction is 3-phosphoshikimate + phosphoenolpyruvate = 5-O-(1-carboxyvinyl)-3-phosphoshikimate + phosphate. It participates in metabolic intermediate biosynthesis; chorismate biosynthesis; chorismate from D-erythrose 4-phosphate and phosphoenolpyruvate: step 6/7. In terms of biological role, catalyzes the transfer of the enolpyruvyl moiety of phosphoenolpyruvate (PEP) to the 5-hydroxyl of shikimate-3-phosphate (S3P) to produce enolpyruvyl shikimate-3-phosphate and inorganic phosphate. The protein is 3-phosphoshikimate 1-carboxyvinyltransferase of Bacillus velezensis (strain DSM 23117 / BGSC 10A6 / LMG 26770 / FZB42) (Bacillus amyloliquefaciens subsp. plantarum).